The chain runs to 403 residues: Palmitoyltransferase ZDHHC23-A (403 aa).

At 1–70 (MKRERFKPPE…ADRLGVSCCT (70 aa)) the chain is on the cytoplasmic side. A helical membrane pass occupies residues 71–91 (VGPLRLELSVLPPMVLIPGLL). Residue R92 is a topological domain, lumenal. Residues 93-113 (VAAINCLLGVIILTALPLLVL) form a helical membrane-spanning segment. The Cytoplasmic segment spans residues 114–125 (WYYYMTHRRKRR). Residues 126–146 (TLFFLSLALFSLAYMYYLFLT) form a helical membrane-spanning segment. The Lumenal portion of the chain corresponds to 147 to 153 (EIVPRGD). The chain crosses the membrane as a helical span at residues 154–174 (VTHLQVVTATTGMMLTLISLV). The Cytoplasmic portion of the chain corresponds to 175-268 (RTKQGPGFVK…NSCVGQANHR (94 aa)). Residues 225–275 (KKCPVCQLVRPPRAGHCRICGACVLRMDHHCVWINSCVGQANHRQFILTLL) enclose the DHHC domain. The active-site S-palmitoyl cysteine intermediate is the C255. Residues 269–289 (QFILTLLLFLLTSFYGISLVL) form a helical membrane-spanning segment. Over 290 to 319 (RSICPKQSLFTAMLYCPGVYNQYSTALCFT) the chain is Lumenal. The helical transmembrane segment at 320–340 (CVWYSVIITGGLLHLFILQII) threads the bilayer. Topologically, residues 341 to 403 (NVSCNVTERE…GSSLNLTDMV (63 aa)) are cytoplasmic.

The protein belongs to the DHHC palmitoyltransferase family.

The protein localises to the golgi apparatus membrane. Its subcellular location is the golgi apparatus. It localises to the trans-Golgi network membrane. The enzyme catalyses L-cysteinyl-[protein] + hexadecanoyl-CoA = S-hexadecanoyl-L-cysteinyl-[protein] + CoA. In terms of biological role, palmitoyltransferase that could catalyze the addition of palmitate onto various protein substrates and be involved in a variety of cellular processes. This is Palmitoyltransferase ZDHHC23-A (zdhhc23a) from Danio rerio (Zebrafish).